A 132-amino-acid chain; its full sequence is Small ribosomal subunit protein uS8 (132 aa).

Belongs to the universal ribosomal protein uS8 family. Part of the 30S ribosomal subunit. Contacts proteins S5 and S12.

Its function is as follows. One of the primary rRNA binding proteins, it binds directly to 16S rRNA central domain where it helps coordinate assembly of the platform of the 30S subunit. The protein is Small ribosomal subunit protein uS8 of Mycolicibacterium gilvum (strain PYR-GCK) (Mycobacterium gilvum (strain PYR-GCK)).